A 953-amino-acid chain; its full sequence is Isoleucine--tRNA ligase (953 aa).

Residues 57–67 carry the 'HIGH' region motif; sequence PYANGDIHIGH. Glu582 serves as a coordination point for L-isoleucyl-5'-AMP. A 'KMSKS' region motif is present at residues 623–627; that stretch reads KMSKS. Lys626 contacts ATP. Residues Cys916, Cys919, Cys936, and Cys939 each coordinate Zn(2+).

It belongs to the class-I aminoacyl-tRNA synthetase family. IleS type 1 subfamily. Monomer. The cofactor is Zn(2+).

It is found in the cytoplasm. The enzyme catalyses tRNA(Ile) + L-isoleucine + ATP = L-isoleucyl-tRNA(Ile) + AMP + diphosphate. In terms of biological role, catalyzes the attachment of isoleucine to tRNA(Ile). As IleRS can inadvertently accommodate and process structurally similar amino acids such as valine, to avoid such errors it has two additional distinct tRNA(Ile)-dependent editing activities. One activity is designated as 'pretransfer' editing and involves the hydrolysis of activated Val-AMP. The other activity is designated 'posttransfer' editing and involves deacylation of mischarged Val-tRNA(Ile). This chain is Isoleucine--tRNA ligase, found in Bordetella bronchiseptica (strain ATCC BAA-588 / NCTC 13252 / RB50) (Alcaligenes bronchisepticus).